Consider the following 86-residue polypeptide: MTHIGSLLLDAATLMVTGMAVVFLFLTLLVYLVQFMSRVIPQEVPEAAATPKKSQKVQPVTDSVSPQVVAAIAAAVHQHRSATAKQ.

The chain crosses the membrane as a helical span at residues 11–33 (AATLMVTGMAVVFLFLTLLVYLV).

The protein belongs to the OadG family. As to quaternary structure, heterotrimer of an alpha, a beta and a gamma subunit. Requires Na(+) as cofactor.

The protein localises to the cell membrane. It catalyses the reaction oxaloacetate + 2 Na(+)(in) + H(+) = pyruvate + 2 Na(+)(out) + CO2. Catalyzes the decarboxylation of oxaloacetate coupled to Na(+) translocation. This is Probable oxaloacetate decarboxylase gamma chain 1 (oadG1) from Vibrio cholerae serotype O1 (strain ATCC 39315 / El Tor Inaba N16961).